Consider the following 152-residue polypeptide: Transcriptional regulator MraZ (152 aa).

2 SpoVT-AbrB domains span residues 5–52 (ATLV…PLPE) and 81–124 (ASEC…DETT).

Belongs to the MraZ family. As to quaternary structure, forms oligomers.

The protein localises to the cytoplasm. It is found in the nucleoid. Negatively regulates its own expression and that of the subsequent genes in the proximal part of the division and cell wall (dcw) gene cluster. Acts by binding directly to DNA. May also regulate the expression of genes outside the dcw cluster. The protein is Transcriptional regulator MraZ of Escherichia fergusonii (strain ATCC 35469 / DSM 13698 / CCUG 18766 / IAM 14443 / JCM 21226 / LMG 7866 / NBRC 102419 / NCTC 12128 / CDC 0568-73).